Reading from the N-terminus, the 107-residue chain is Ig kappa chain V-VI region XRPC 44 (107 aa).

The framework-1 stretch occupies residues 1–23 (EIVLTQSPAITAASLGQKVTITC). The cysteines at positions 23 and 87 are disulfide-linked. A complementarity-determining-1 region spans residues 24-33 (SASSSVSYMH). Residues 34-48 (WYQQKSGTSPKPWIY) are framework-2. The tract at residues 49 to 55 (EISKLAS) is complementarity-determining-2. The interval 56 to 87 (GVPARFSGSGSGTSYSLTISSMEAEDAAIYYC) is framework-3. The interval 88-96 (QQWNYPLWT) is complementarity-determining-3. The segment at 97 to 106 (FGGGTKLEIK) is framework-4.

This is Ig kappa chain V-VI region XRPC 44 from Mus musculus (Mouse).